The sequence spans 498 residues: Ribose import ATP-binding protein RbsA (498 aa).

2 ABC transporter domains span residues L2–D237 and V247–Q491. G34–S41 provides a ligand contact to ATP.

This sequence belongs to the ABC transporter superfamily. Ribose importer (TC 3.A.1.2.1) family. The complex is composed of an ATP-binding protein (RbsA), two transmembrane proteins (RbsC) and a solute-binding protein (RbsB).

It is found in the cell membrane. The catalysed reaction is D-ribose(out) + ATP + H2O = D-ribose(in) + ADP + phosphate + H(+). Functionally, part of the ABC transporter complex RbsABC involved in ribose import. Responsible for energy coupling to the transport system. In Deinococcus geothermalis (strain DSM 11300 / CIP 105573 / AG-3a), this protein is Ribose import ATP-binding protein RbsA.